The following is a 65-amino-acid chain: Prokaryotic ubiquitin-like protein Pup (65 aa).

Positions 1–38 (MANAQQQVFGGGGGDDAENNDAPQQGSGTQQVNVTGTD) are disordered. Positions 21 to 59 (DAPQQGSGTQQVNVTGTDDLLDEIDGLLETNAEEFVRSY) are ARC ATPase binding. The span at 22-34 (APQQGSGTQQVNV) shows a compositional bias: polar residues. Position 65 is a deamidated glutamine (Gln65). Gln65 participates in a covalent cross-link: Isoglutamyl lysine isopeptide (Gln-Lys) (interchain with K-? in acceptor proteins).

Belongs to the prokaryotic ubiquitin-like protein family. In terms of assembly, strongly interacts with the proteasome-associated ATPase ARC through a hydrophobic interface; the interacting region of Pup lies in its C-terminal half. There is one Pup binding site per ARC hexamer ring. Is modified by deamidation of its C-terminal glutamine to glutamate by the deamidase Dop, a prerequisite to the subsequent pupylation process.

It participates in protein degradation; proteasomal Pup-dependent pathway. In terms of biological role, protein modifier that is covalently attached to lysine residues of substrate proteins, thereby targeting them for proteasomal degradation. The tagging system is termed pupylation. The chain is Prokaryotic ubiquitin-like protein Pup from Corynebacterium urealyticum (strain ATCC 43042 / DSM 7109).